The chain runs to 392 residues: Putative transactivator/viroplasmin protein (392 aa).

Residues 1–88 (MEDMMKQILE…NVEEQYQWKN (88 aa)) are a coiled coil. Positions 358 to 392 (EIEKEEPGEEKNLEDVSTDDNNEKKKIRSVIVKET) are disordered.

It belongs to the caulimoviridae viroplasmin family.

It localises to the host cytoplasm. Its function is as follows. Enhances the translation of downstream ORFs on polycistronic mRNAs derived from cassava vein mosaic virus. The chain is Putative transactivator/viroplasmin protein from Cassava vein mosaic virus (CsVMV).